The primary structure comprises 61 residues: Temporin-SN4 (61 aa).

The N-terminal stretch at 1-22 (MFTLKKTLLLLFFLGTINLSLC) is a signal peptide. Positions 23 to 44 (EEERNAEEERRDGDDEMDVEVK) are cleaved as a propeptide — removed in mature form. At Lys-61 the chain carries Lysine amide.

This sequence belongs to the frog skin active peptide (FSAP) family. Temporin subfamily. As to expression, expressed by the skin glands.

The protein resides in the secreted. In terms of biological role, antimicrobial peptide. Active against some Gram-positive and Gram-negative bacterial strains. Active against fungus C.glabrata 090902 but not against C.albicans ATCC 12231. Shows weak hemolytic activity against human erythrocytes. The polypeptide is Temporin-SN4 (Sylvirana spinulosa (Fine-spined frog)).